Consider the following 499-residue polypeptide: Zinc finger protein PLAG1 (499 aa).

Residues Met1 to Asn33 form a disordered region. Residues Ala2–Ala84 are interaction with KPNA2. The Nuclear localization signal motif lies at Lys22–Arg25. C2H2-type zinc fingers lie at residues Phe34–His56, Tyr62–His86, His92–His114, Phe121–His143, Leu150–His172, His185–His207, and Phe213–His236. Positions Lys41–Lys242 are decreased nuclear import with localization in the nucleus but also in the cytoplasm. Residues Val243–Leu383 form a repression domain; contains 3 sumoylation motifs and massively decrease transcription activity region. Residues Val243–Gln499 form an activates transcription; Inhibition of nuclear import due to lack of NLS and KPNA2 interaction region. Glycyl lysine isopeptide (Lys-Gly) (interchain with G-Cter in SUMO) cross-links involve residues Lys244 and Lys263. Low complexity predominate over residues Gly365–Ser379. A disordered region spans residues Gly365–Ser400. Positions Glu384 to Gln499 are massively activates transcription.

Belongs to the krueppel C2H2-type zinc-finger protein family. As to quaternary structure, interacts with KPNA2, which escorts protein to the nucleus via interaction with nuclear localization signal. Interacts with E3 SUMO-protein ligase PIAS1, PIAS2 and PIAS4. Sumoylated with SUMO1; which inhibits transcriptional activity, but does not affect nuclear localization. Blockers of sumoylation pathway such as SENP3 and inactive UBE2I increases transcriptional capacity. Sumoylation is increased in the presence of PIAS1. In terms of processing, acetylated by lysine acetyltransferase EP300; which activates transcriptional capacity. Lysine residues that are sumoylated also seem to be target for acetylation. Expressed in heart, spleen, lung, kidney, brain, testis and epididymis but not in salivary glands.

The protein resides in the nucleus. Functionally, transcription factor whose activation results in up-regulation of target genes, such as IGFII, leading to uncontrolled cell proliferation: when overexpressed in cultured cells, higher proliferation rate and transformation are observed. Other target genes such as CRLF1, CRABP2, CRIP2, PIGF are strongly induced in cells with PLAG1 induction. Proto-oncogene whose ectopic expression can trigger the development of pleomorphic adenomas of the salivary gland and lipoblastomas. Cooperates with CBFB-MYH11. The chain is Zinc finger protein PLAG1 (Plag1) from Mus musculus (Mouse).